Consider the following 88-residue polypeptide: Small ribosomal subunit protein uS15 (88 aa).

This sequence belongs to the universal ribosomal protein uS15 family. As to quaternary structure, part of the 30S ribosomal subunit. Forms a bridge to the 50S subunit in the 70S ribosome, contacting the 23S rRNA.

In terms of biological role, one of the primary rRNA binding proteins, it binds directly to 16S rRNA where it helps nucleate assembly of the platform of the 30S subunit by binding and bridging several RNA helices of the 16S rRNA. Functionally, forms an intersubunit bridge (bridge B4) with the 23S rRNA of the 50S subunit in the ribosome. The protein is Small ribosomal subunit protein uS15 of Borrelia garinii subsp. bavariensis (strain ATCC BAA-2496 / DSM 23469 / PBi) (Borreliella bavariensis).